A 226-amino-acid chain; its full sequence is MSKINNDWKEILEEEFEKEYFIKLKETLEEEYKNYTVYPPKRDILNAFFLTPYSEVKVVLLGQDPYHQRGQAHGLAFSVNYEIKTPPSLVNMYKELQDDLGLYIPNNGFLEKWSKQGVLLLNTTLTVRDSEANSHSKIGWQTFTDNVIKSLNEREKPVIFILWGNNAKSKEKFIDTNKHYILKGVHPSPLSANKGFFGCKHFSEANRILKNLGEKEIDWQIENKEI.

Aspartate 64 acts as the Proton acceptor in catalysis.

The protein belongs to the uracil-DNA glycosylase (UDG) superfamily. UNG family.

It localises to the cytoplasm. The catalysed reaction is Hydrolyzes single-stranded DNA or mismatched double-stranded DNA and polynucleotides, releasing free uracil.. Excises uracil residues from the DNA which can arise as a result of misincorporation of dUMP residues by DNA polymerase or due to deamination of cytosine. The protein is Uracil-DNA glycosylase of Fusobacterium nucleatum subsp. nucleatum (strain ATCC 25586 / DSM 15643 / BCRC 10681 / CIP 101130 / JCM 8532 / KCTC 2640 / LMG 13131 / VPI 4355).